A 365-amino-acid chain; its full sequence is Flagellar P-ring protein (365 aa).

Positions 1–19 are cleaved as a signal peptide; it reads MIKFLSALILLLVTTAAQA.

This sequence belongs to the FlgI family. In terms of assembly, the basal body constitutes a major portion of the flagellar organelle and consists of four rings (L,P,S, and M) mounted on a central rod.

It is found in the periplasm. Its subcellular location is the bacterial flagellum basal body. Assembles around the rod to form the L-ring and probably protects the motor/basal body from shearing forces during rotation. This Shigella boydii serotype 4 (strain Sb227) protein is Flagellar P-ring protein.